The following is a 122-amino-acid chain: Biogenesis of lysosome-related organelles complex 1 subunit CNL1 (122 aa).

A compositionally biased stretch (basic and acidic residues) spans 1 to 10 (MQDNSSHSRE). A disordered region spans residues 1 to 21 (MQDNSSHSRESASAGDDPLGI). A coiled-coil region spans residues 63-95 (ENTIDKNIAKFKELLEKCDTLENHYEMLNQLAI).

The protein belongs to the BLOC1S4 family. In terms of assembly, component of the biogenesis of lysosome-related organelles complex-1 (BLOC-1) composed of at least BLI1, BLS1, CNL1, KXD1, SNN1 and VAB2.

The protein resides in the cytoplasm. In terms of biological role, component of the biogenesis of lysosome-related organelles complex-1 (BLOC-1), a complex that is involved in endosomal cargo sorting. This Saccharomyces cerevisiae (strain ATCC 204508 / S288c) (Baker's yeast) protein is Biogenesis of lysosome-related organelles complex 1 subunit CNL1 (CNL1).